A 208-amino-acid chain; its full sequence is Guanylate kinase (208 aa).

The Guanylate kinase-like domain occupies 8–187 (GVCLVISAPS…AISQARSVLT (180 aa)). 15-22 (APSGAGKS) contributes to the ATP binding site.

It belongs to the guanylate kinase family.

It is found in the cytoplasm. It carries out the reaction GMP + ATP = GDP + ADP. Functionally, essential for recycling GMP and indirectly, cGMP. The polypeptide is Guanylate kinase (Gluconobacter oxydans (strain 621H) (Gluconobacter suboxydans)).